The primary structure comprises 381 residues: Cytochrome b (381 aa).

4 helical membrane-spanning segments follow: residues 34–54, 78–99, 114–134, and 179–199; these read FGSLLGLCLIIQILTGLFLAM, WLIRNIHANGASLFFICVYLHI, WNIGVILLFLLMATAFVGYVL, and FFAFHFLLPFLILALTVIHLL. Residues histidine 84 and histidine 98 each coordinate heme b. Heme b contacts are provided by histidine 183 and histidine 197. Histidine 202 is an a ubiquinone binding site. A run of 4 helical transmembrane segments spans residues 227–247, 289–309, 321–341, and 348–368; these read YKDLLGFFVMIFLLATLALFT, LGGVLALLFSIFILMLVPLLH, LTQIFFWFLVANSIILTWIGG, and FIMVGQIASISYFSLFLIIMP.

This sequence belongs to the cytochrome b family. The cytochrome bc1 complex contains 3 respiratory subunits (MT-CYB, CYC1 and UQCRFS1), 2 core proteins (UQCRC1 and UQCRC2) and probably 6 low-molecular weight proteins. The cofactor is heme b.

It localises to the mitochondrion inner membrane. Component of the ubiquinol-cytochrome c reductase complex (complex III or cytochrome b-c1 complex) that is part of the mitochondrial respiratory chain. The b-c1 complex mediates electron transfer from ubiquinol to cytochrome c. Contributes to the generation of a proton gradient across the mitochondrial membrane that is then used for ATP synthesis. This is Cytochrome b (mt-cyb) from Negaprion brevirostris (Lemon shark).